The sequence spans 72 residues: Cell division protein ZapB (72 aa).

The stretch at 3–71 (LSIIDQLEEK…LRSLLGQIDN (69 aa)) forms a coiled coil.

The protein belongs to the ZapB family. In terms of assembly, homodimer. The ends of the coiled-coil dimer bind to each other, forming polymers. Interacts with FtsZ.

It localises to the cytoplasm. In terms of biological role, non-essential, abundant cell division factor that is required for proper Z-ring formation. It is recruited early to the divisome by direct interaction with FtsZ, stimulating Z-ring assembly and thereby promoting cell division earlier in the cell cycle. Its recruitment to the Z-ring requires functional FtsA or ZipA. This is Cell division protein ZapB from Haemophilus ducreyi (strain 35000HP / ATCC 700724).